Consider the following 96-residue polypeptide: Small ribosomal subunit protein bS6 (96 aa).

The protein belongs to the bacterial ribosomal protein bS6 family.

In terms of biological role, binds together with bS18 to 16S ribosomal RNA. This chain is Small ribosomal subunit protein bS6, found in Salinispora arenicola (strain CNS-205).